Reading from the N-terminus, the 31-residue chain is Cytochrome b6-f complex subunit 6 (31 aa).

Residues 4-26 (ITSYFGFLLTALTITSALFIGLS) form a helical membrane-spanning segment.

Belongs to the PetL family. In terms of assembly, the 4 large subunits of the cytochrome b6-f complex are cytochrome b6, subunit IV (17 kDa polypeptide, PetD), cytochrome f and the Rieske protein, while the 4 small subunits are PetG, PetL, PetM and PetN. The complex functions as a dimer.

The protein resides in the plastid. It is found in the chloroplast thylakoid membrane. Functionally, component of the cytochrome b6-f complex, which mediates electron transfer between photosystem II (PSII) and photosystem I (PSI), cyclic electron flow around PSI, and state transitions. PetL is important for photoautotrophic growth as well as for electron transfer efficiency and stability of the cytochrome b6-f complex. This Lactuca sativa (Garden lettuce) protein is Cytochrome b6-f complex subunit 6.